The primary structure comprises 725 residues: Sesterterpene synthase btcA (725 aa).

The interval 1-333 is terpene cyclase; that stretch reads MANPPVTEWK…CANCPRHHAW (333 aa). D100 lines the Mg(2+) pocket. Substrate-binding positions include D100, N236, 240-244, and 329-330; these read SWGRE and RH. The DDXXD 1 motif lies at 100–104; it reads DDATE. An NSE/DTE motif is present at residues 236–244; that stretch reads NDYWSWGRE. Residues 334 to 722 form a prenyltransferase region; that stretch reads KEQDQAVHAV…MLYVLLQTLS (389 aa). A disordered region spans residues 352–426; sequence VEAQSPSSAT…PSSLHLLKSP (75 aa). Residues 355 to 364 are compositionally biased toward polar residues; it reads QSPSSATHTA. The segment covering 375-419 has biased composition (low complexity); that stretch reads APSPISSPSSSSSAKPSSSSAADSSSCTSTSQHSPSETDSTPPSS. Isopentenyl diphosphate contacts are provided by K442, R445, and H474. Mg(2+) is bound by residues D481 and D485. Positions 481–485 match the DDXXD 2 motif; the sequence is DDIQD. R490 serves as a coordination point for dimethylallyl diphosphate. Residue R491 participates in isopentenyl diphosphate binding. Residues K568, T569, Q604, N611, K621, and K631 each coordinate dimethylallyl diphosphate.

It in the N-terminal section; belongs to the terpene synthase family. The protein in the C-terminal section; belongs to the FPP/GGPP synthase family. In terms of assembly, hexamer. Mg(2+) is required as a cofactor.

The catalysed reaction is isopentenyl diphosphate + (2E,6E)-farnesyl diphosphate = (2E,6E,10E)-geranylgeranyl diphosphate + diphosphate. The enzyme catalyses isopentenyl diphosphate + (2E,6E,10E)-geranylgeranyl diphosphate = (2E,6E,10E,14E)-geranylfarnesyl diphosphate + diphosphate. It functions in the pathway secondary metabolite biosynthesis; terpenoid biosynthesis. In terms of biological role, bifunctional terpene synthase; part of the gene cluster that mediates the biosynthesis of betaestacins. The bifunctional terpene synthase btcA converts isopentenyl diphosphate (IPP) and dimethylallyl diphosphate (DMAPP) into the sesterterpene betaestacin I. The C-terminal prenyltransferase (PT) domain of btcA catalyzes formation of GFPP, whereas the N-terminal terpene cyclase (TC) domain catalyzes the cyclization of GFPP into betaestacin I. The cytochrome P450 monooxygenase btcB is then responsible for the six-step oxidation of betaestacin I to yield betaestacin II. The roles of the cytochrome P450 monooxygenase btcC and the alpha-ketoglutarate-dependent dioxygenase btcD have not been identified yet. This Neocamarosporium betae (Beet black rot fungus) protein is Sesterterpene synthase btcA.